The primary structure comprises 348 residues: MWNKWAEVSRMNLKNNVELIRQKLPDLEPIAVVKDDAYGHDAAVVVPELLKNGITKFAVVYAKDALMLSEFGAEWILVLDDPPLSNMCSEYEKRGIRFCITDSKWLSDGLLELPIKFHLFVDVGMHREGVPWYETNTIREICKVVGNRLEGICSHLSNGLSDSQALATEEERFREVLSIAPEGLMVHLSNSASLYNAKFPYATHFRPGISLYGYGYPGLKPVLSLKARVIHEHILEPGEGLSYGWTWRATEPTHVVTVPVGYGDGYNRKLSNKAIAGSKAGNLQQIGTVTMDFTMFEAPKNVTVGDEIVLMGEWEGGHFWADEMAQLVGTIPYEVLTSINPRVPRVLV.

Lys34 serves as the catalytic Proton acceptor; specific for D-alanine. At Lys34 the chain carries N6-(pyridoxal phosphate)lysine. Arg127 contributes to the substrate binding site. The active-site Proton acceptor; specific for L-alanine is Tyr243. Met291 contacts substrate.

This sequence belongs to the alanine racemase family. It depends on pyridoxal 5'-phosphate as a cofactor.

The enzyme catalyses L-alanine = D-alanine. The protein operates within amino-acid biosynthesis; D-alanine biosynthesis; D-alanine from L-alanine: step 1/1. Functionally, catalyzes the interconversion of L-alanine and D-alanine. May also act on other amino acids. The polypeptide is Alanine racemase (alr) (Coprothermobacter proteolyticus (strain ATCC 35245 / DSM 5265 / OCM 4 / BT)).